The primary structure comprises 338 residues: Nicotinate-nucleotide--dimethylbenzimidazole phosphoribosyltransferase (338 aa).

The Proton acceptor role is filled by glutamate 305.

Belongs to the CobT family.

The enzyme catalyses 5,6-dimethylbenzimidazole + nicotinate beta-D-ribonucleotide = alpha-ribazole 5'-phosphate + nicotinate + H(+). The protein operates within nucleoside biosynthesis; alpha-ribazole biosynthesis; alpha-ribazole from 5,6-dimethylbenzimidazole: step 1/2. In terms of biological role, catalyzes the synthesis of alpha-ribazole-5'-phosphate from nicotinate mononucleotide (NAMN) and 5,6-dimethylbenzimidazole (DMB). The protein is Nicotinate-nucleotide--dimethylbenzimidazole phosphoribosyltransferase of Rhizobium etli (strain ATCC 51251 / DSM 11541 / JCM 21823 / NBRC 15573 / CFN 42).